A 210-amino-acid polypeptide reads, in one-letter code: Fibrillarin-like rRNA/tRNA 2'-O-methyltransferase (210 aa).

The tract at residues 1-34 (MTLPSGVERHDFGGETSLATQGQPVYGERTDGDW) is disordered. S-adenosyl-L-methionine is bound by residues 71 to 72 (TT), 87 to 88 (EF), 112 to 113 (DA), and 132 to 135 (DVAT).

It belongs to the methyltransferase superfamily. Fibrillarin family. Interacts with nop5. Component of box C/D small ribonucleoprotein (sRNP) particles that contain rpl7ae, FlpA and nop5, plus a guide RNA.

In terms of biological role, involved in pre-rRNA and tRNA processing. Utilizes the methyl donor S-adenosyl-L-methionine to catalyze the site-specific 2'-hydroxyl methylation of ribose moieties in rRNA and tRNA. Site specificity is provided by a guide RNA that base pairs with the substrate. Methylation occurs at a characteristic distance from the sequence involved in base pairing with the guide RNA. In Haloarcula marismortui (strain ATCC 43049 / DSM 3752 / JCM 8966 / VKM B-1809) (Halobacterium marismortui), this protein is Fibrillarin-like rRNA/tRNA 2'-O-methyltransferase.